Consider the following 371-residue polypeptide: Probable trehalose-phosphate phosphatase 1 (371 aa).

This sequence belongs to the trehalose phosphatase family. A divalent metal cation serves as cofactor. In terms of tissue distribution, expressed in roots and shoots.

It catalyses the reaction alpha,alpha-trehalose 6-phosphate + H2O = alpha,alpha-trehalose + phosphate. Its pathway is glycan biosynthesis; trehalose biosynthesis. Functionally, removes the phosphate from trehalose 6-phosphate to produce free trehalose. Trehalose accumulation in plant improves abiotic stress tolerance. The polypeptide is Probable trehalose-phosphate phosphatase 1 (TPP1) (Oryza sativa subsp. japonica (Rice)).